Consider the following 274-residue polypeptide: MALLSFERKYRVRGGTLIGGDLFDFWVGPYFVGFFGVSAIFFIFLGVSLIGYAASQGPTWDPFAISINPPDLKYGLGAAPLLEGGFWQAITVCALGAFISWMLREVEISRKLGIGWHVPLAFCVPIFMFCVLQVFRPLLLGSWGHAFPYGILSHLDWVNNFGYQYLNWHYNPGHMSSVSFLFVNAMALGLHGGLILSVANPGDGDKVKTAEHENQYFRDVVGYSIGALSIHRLGLFLASNIFLTGAFGTIASGPFWTRGWPEWWGWWLDIPFWS.

Over alanine 2–valine 32 the chain is Cytoplasmic. Residues glycine 33–alanine 53 form a helical membrane-spanning segment. At alanine 54–glutamate 83 the chain is on the periplasmic side. Residues glycine 84–lysine 111 traverse the membrane as a helical segment. Residues leucine 112–glycine 115 are Cytoplasmic-facing. A helical membrane pass occupies residues tryptophan 116–leucine 139. The Periplasmic portion of the chain corresponds to leucine 140–tyrosine 170. (7R,8Z)-bacteriochlorophyll b contacts are provided by histidine 154 and histidine 174. The helical transmembrane segment at asparagine 171–valine 198 threads the bilayer. Histidine 191 provides a ligand contact to Fe cation. Over alanine 199–isoleucine 225 the chain is Cytoplasmic. Position 217 (phenylalanine 217) interacts with a ubiquinone. A helical transmembrane segment spans residues glycine 226–threonine 249. Histidine 231 is a Fe cation binding site. Residues isoleucine 250–serine 274 lie on the Periplasmic side of the membrane.

Belongs to the reaction center PufL/M/PsbA/D family. In terms of assembly, reaction center is composed of four bacteriochlorophylls, two bacteriopheophytins, two ubiquinones, one iron, and three highly hydrophobic polypeptide chains (designated L, M, and H).

The protein resides in the cellular chromatophore membrane. In terms of biological role, the reaction center is a membrane-bound complex that mediates the initial photochemical event in the electron transfer process of photosynthesis. The polypeptide is Reaction center protein L chain (pufL) (Blastochloris viridis (Rhodopseudomonas viridis)).